A 649-amino-acid chain; its full sequence is Quinol oxidase subunit 1 (649 aa).

Topologically, residues 1–13 (MKFKWDEFFVTGD) are extracellular. A helical transmembrane segment spans residues 14–34 (PLILGAQVSIALSTIAIIFVL). Residues 35 to 55 (TYFKKWKWLWSEWITTVDHKK) are Cytoplasmic-facing. A helical transmembrane segment spans residues 56–76 (LGIMYIISAVIMLFRGGVDGL). Residues 77–104 (MMRAQLALPNNSFLDSNHYNEIFTTHGT) are Extracellular-facing. Histidine 102 contacts Fe(II)-heme a. Residues 105-125 (IMIIFMAMPFLIGLINVVVPL) traverse the membrane as a helical segment. The Cytoplasmic segment spans residues 126–139 (QIGARDVAFPYLNN). Residues 140–160 (LSFWTFFVGAMLFNISFVIGG) form a helical membrane-spanning segment. Topologically, residues 161–187 (SPNAGWTSYMPLASNDMSPGPGENYYL) are extracellular. A helical membrane pass occupies residues 188 to 208 (LGLQIAGIGTLMTGINFMVTI). Over 209 to 228 (LKMRTKGMTLMRMPMFTWTT) the chain is Cytoplasmic. The chain crosses the membrane as a helical span at residues 229–249 (LITMVIIVFAFPVLTVALALL). At 250-273 (SFDRLFGAHFFTLEAGGMPMLWAN) the chain is on the extracellular side. A helical transmembrane segment spans residues 274 to 294 (LFWIWGHPEVYIVILPAFGIF). Residues histidine 280 and tyrosine 284 each contribute to the Cu cation site. The 1'-histidyl-3'-tyrosine (His-Tyr) cross-link spans 280-284 (HPEVY). At 295–305 (SEIISSFARKQ) the chain is on the cytoplasmic side. A helical membrane pass occupies residues 306–326 (LFGYTAMVGSIIAISVLSFLV). The Extracellular segment spans residues 327 to 342 (WTHHFFTMGNSASVNS). Residues histidine 329 and histidine 330 each contribute to the Cu cation site. Residues 343 to 363 (FFSITTMAISIPTGVKIFNWL) traverse the membrane as a helical segment. The Cytoplasmic portion of the chain corresponds to 364–376 (FTMYKGRISFTTP). A helical membrane pass occupies residues 377-397 (MLWALAFIPNFVIGGVTGVML). Residues 398–415 (AMAAADYQYHNTYFLVSH) are Extracellular-facing. Heme a3 is bound at residue histidine 415. The chain crosses the membrane as a helical span at residues 416–436 (FHYVLIAGTVFACFAGFIFWY). Histidine 417 provides a ligand contact to Fe(II)-heme a. At 437–451 (PKMFGHKLNERIGKW) the chain is on the cytoplasmic side. Residues 452 to 472 (FFWIFMIGFNICFFPQYFLGL) form a helical membrane-spanning segment. The Extracellular segment spans residues 473–492 (QGMPRRIYTYGPNDGWTTLN). Residues 493 to 513 (FISTVGAFMMGVGFLILCYNI) form a helical membrane-spanning segment. Topologically, residues 514–585 (YYSFRYSTRE…KFKKIHMPSN (72 aa)) are cytoplasmic. A helical transmembrane segment spans residues 586-603 (SGRPFFMSVAFGIAGFGL). The Extracellular segment spans residues 604–606 (VFE). Residues 607 to 624 (WYWMGVVGLIGVLLCMVL) form a helical membrane-spanning segment. The Cytoplasmic portion of the chain corresponds to 625–649 (RSFEYDNGYYISVDEIKETERKISE).

Belongs to the heme-copper respiratory oxidase family. Cu cation serves as cofactor. It depends on ferriheme a as a cofactor. Heme A3. is required as a cofactor.

The protein localises to the cell membrane. It carries out the reaction 2 a quinol + O2 = 2 a quinone + 2 H2O. It participates in energy metabolism; oxidative phosphorylation. In terms of biological role, catalyzes quinol oxidation with the concomitant reduction of oxygen to water. Major component for energy conversion during vegetative growth. In Bacillus spizizenii (strain ATCC 23059 / NRRL B-14472 / W23) (Bacillus subtilis subsp. spizizenii), this protein is Quinol oxidase subunit 1 (qoxB).